Here is a 380-residue protein sequence, read N- to C-terminus: Queuine tRNA-ribosyltransferase (380 aa).

The active-site Proton acceptor is Asp96. Substrate contacts are provided by residues 96–100, Asp150, Gln193, and Gly220; that span reads DSGGF. Residues 251 to 257 form an RNA binding region; sequence GVGAPDS. The Nucleophile role is filled by Asp270. Residues 275–279 are RNA binding; important for wobble base 34 recognition; that stretch reads TRIAR. Residues Cys308, Cys310, Cys313, and His339 each coordinate Zn(2+).

The protein belongs to the queuine tRNA-ribosyltransferase family. Homodimer. Within each dimer, one monomer is responsible for RNA recognition and catalysis, while the other monomer binds to the replacement base PreQ1. Zn(2+) is required as a cofactor.

The catalysed reaction is 7-aminomethyl-7-carbaguanine + guanosine(34) in tRNA = 7-aminomethyl-7-carbaguanosine(34) in tRNA + guanine. It functions in the pathway tRNA modification; tRNA-queuosine biosynthesis. Functionally, catalyzes the base-exchange of a guanine (G) residue with the queuine precursor 7-aminomethyl-7-deazaguanine (PreQ1) at position 34 (anticodon wobble position) in tRNAs with GU(N) anticodons (tRNA-Asp, -Asn, -His and -Tyr). Catalysis occurs through a double-displacement mechanism. The nucleophile active site attacks the C1' of nucleotide 34 to detach the guanine base from the RNA, forming a covalent enzyme-RNA intermediate. The proton acceptor active site deprotonates the incoming PreQ1, allowing a nucleophilic attack on the C1' of the ribose to form the product. After dissociation, two additional enzymatic reactions on the tRNA convert PreQ1 to queuine (Q), resulting in the hypermodified nucleoside queuosine (7-(((4,5-cis-dihydroxy-2-cyclopenten-1-yl)amino)methyl)-7-deazaguanosine). The protein is Queuine tRNA-ribosyltransferase of Streptococcus pyogenes serotype M3 (strain ATCC BAA-595 / MGAS315).